Reading from the N-terminus, the 475-residue chain is Aspartyl/glutamyl-tRNA(Asn/Gln) amidotransferase subunit B (475 aa).

It belongs to the GatB/GatE family. GatB subfamily. As to quaternary structure, heterotrimer of A, B and C subunits.

It catalyses the reaction L-glutamyl-tRNA(Gln) + L-glutamine + ATP + H2O = L-glutaminyl-tRNA(Gln) + L-glutamate + ADP + phosphate + H(+). The catalysed reaction is L-aspartyl-tRNA(Asn) + L-glutamine + ATP + H2O = L-asparaginyl-tRNA(Asn) + L-glutamate + ADP + phosphate + 2 H(+). Functionally, allows the formation of correctly charged Asn-tRNA(Asn) or Gln-tRNA(Gln) through the transamidation of misacylated Asp-tRNA(Asn) or Glu-tRNA(Gln) in organisms which lack either or both of asparaginyl-tRNA or glutaminyl-tRNA synthetases. The reaction takes place in the presence of glutamine and ATP through an activated phospho-Asp-tRNA(Asn) or phospho-Glu-tRNA(Gln). In Thermoanaerobacter pseudethanolicus (strain ATCC 33223 / 39E) (Clostridium thermohydrosulfuricum), this protein is Aspartyl/glutamyl-tRNA(Asn/Gln) amidotransferase subunit B.